A 370-amino-acid chain; its full sequence is Sphingolipid delta(4)-desaturase (370 aa).

3 helical membrane passes run 68–88 (VMGV…TPVF), 92–112 (FLTL…LAIH), and 128–148 (LFAV…FQPY). A Histidine box-1 motif is present at residues 112-116 (HELSH). A Histidine box-2 motif is present at residues 149-153 (HQLHH). 3 helical membrane-spanning segments follow: residues 173–193 (FLSS…FYAL), 197–217 (FITQ…QLIF), and 220–240 (VMVT…TFLA). The Histidine box-3 motif lies at 299–303 (HNEHH).

Belongs to the fatty acid desaturase type 1 family. DEGS subfamily.

Its subcellular location is the membrane. It carries out the reaction an N-acylsphinganine + 2 Fe(II)-[cytochrome b5] + O2 + 2 H(+) = an N-acylsphing-4-enine + 2 Fe(III)-[cytochrome b5] + 2 H2O. It functions in the pathway lipid metabolism; sphingolipid metabolism. Delta(4)-fatty-acid desaturase which introduces a double bond at the 4-position in the long-chain base (LCB) of ceramides. Required for the formation of the monounsaturated sphingoid base (E)-sphing-4-enine during glucosylceramide (GluCer) biosynthesis. The sequence is that of Sphingolipid delta(4)-desaturase from Candida albicans (strain SC5314 / ATCC MYA-2876) (Yeast).